The chain runs to 170 residues: NADH-quinone oxidoreductase subunit B (170 aa).

The [4Fe-4S] cluster site is built by Cys-46, Cys-47, Cys-111, and Cys-141.

It belongs to the complex I 20 kDa subunit family. In terms of assembly, NDH-1 is composed of 14 different subunits. Subunits NuoB, C, D, E, F, and G constitute the peripheral sector of the complex. [4Fe-4S] cluster serves as cofactor.

Its subcellular location is the cell membrane. The catalysed reaction is a quinone + NADH + 5 H(+)(in) = a quinol + NAD(+) + 4 H(+)(out). In terms of biological role, NDH-1 shuttles electrons from NADH, via FMN and iron-sulfur (Fe-S) centers, to quinones in the respiratory chain. The immediate electron acceptor for the enzyme in this species is believed to be a menaquinone. Couples the redox reaction to proton translocation (for every two electrons transferred, four hydrogen ions are translocated across the cytoplasmic membrane), and thus conserves the redox energy in a proton gradient. This is NADH-quinone oxidoreductase subunit B from Geobacillus thermodenitrificans (strain NG80-2).